Reading from the N-terminus, the 265-residue chain is Glutamate racemase (265 aa).

Substrate is bound by residues D13–S14 and Y45–G46. Catalysis depends on C77, which acts as the Proton donor/acceptor. N78–T79 provides a ligand contact to substrate. C185 acts as the Proton donor/acceptor in catalysis. Substrate is bound at residue T186–H187.

This sequence belongs to the aspartate/glutamate racemases family.

It carries out the reaction L-glutamate = D-glutamate. It functions in the pathway cell wall biogenesis; peptidoglycan biosynthesis. Functionally, provides the (R)-glutamate required for cell wall biosynthesis. The chain is Glutamate racemase from Vibrio cholerae serotype O1 (strain ATCC 39315 / El Tor Inaba N16961).